The sequence spans 950 residues: F-box only protein 10 (950 aa).

The F-box domain occupies 1–48 (METGGLPLELWRMILAYLHLPDLGRCSLVCRAWYELILSLDSTRWRQL). 2 PbH1 repeats span residues 198-217 (SGHI…QVHG) and 238-260 (VPLC…TVEG). The interval 313-364 (IEGSQSPTSPVCSSPKPGSKEAEVGSDGERVAQTPDSSDGGLSPSGEDEDDE) is disordered. Residues 315–324 (GSQSPTSPVC) show a composition bias toward polar residues. A phosphoserine mark is found at serine 321 and serine 326. Positions 330 to 342 (GSKEAEVGSDGER) are enriched in basic and acidic residues. Positions 347–357 (PDSSDGGLSPS) are enriched in low complexity. PbH1 repeat units lie at residues 423-444 (VQGC…FVCS), 467-489 (NSKI…FLRL), 490-512 (EGGG…DIRK), 513-535 (KSNP…VVLG), 536-558 (NGKG…YILY), 559-581 (HGNP…AVNE), 582-604 (NGKG…DIRR), 605-627 (GGVP…VVGD), 628-650 (EGKG…WMMS), 651-673 (SSLP…AVFS), 713-735 (ITVA…FVQS), 736-758 (SEAL…TIVQ), 760-782 (SQLT…KVEF), 783-805 (QCKV…ITKG), and 828-850 (RSDT…AVRG).

In terms of assembly, component of the SCF(FBXO10) complex consisting of CUL1, SKP1 and FBXO10. Interacts with BCL2. Interacts with PRDM1. As to expression, particularly highly expressed in B-cells.

It localises to the cytoplasm. It functions in the pathway protein modification; protein ubiquitination. In terms of biological role, substrate-recognition component of the SCF (SKP1-CUL1-F-box protein)-type E3 ubiquitin ligase complex. Mediates the ubiquitination and degradation of BCL2, an antiapoptotic protein, thereby playing a role in apoptosis by controlling the stability of BCL2. Targets also the receptor for advanced glycation end products RAGE for ubiquitination and subsequent lysosomal degradation. Directly controls HGAL/GCSAM ubiquitination and degradation and thereby decreases BCR signaling. The polypeptide is F-box only protein 10 (Fbxo10) (Mus musculus (Mouse)).